Here is a 256-residue protein sequence, read N- to C-terminus: 5'-nucleotidase SurE (256 aa).

A divalent metal cation contacts are provided by Asp8, Asp9, Ser39, and Asn95.

It belongs to the SurE nucleotidase family. It depends on a divalent metal cation as a cofactor.

It localises to the cytoplasm. The catalysed reaction is a ribonucleoside 5'-phosphate + H2O = a ribonucleoside + phosphate. Functionally, nucleotidase that shows phosphatase activity on nucleoside 5'-monophosphates. The polypeptide is 5'-nucleotidase SurE (Methanosphaera stadtmanae (strain ATCC 43021 / DSM 3091 / JCM 11832 / MCB-3)).